We begin with the raw amino-acid sequence, 294 residues long: Syntaxin-19 (294 aa).

The t-SNARE coiled-coil homology domain occupies 209-271 (LSEIEQRHKE…NNTKEKFGLA (63 aa)).

Belongs to the syntaxin family. As to quaternary structure, interacts with EGFR.

The protein localises to the cell membrane. Its subcellular location is the cytoplasm. Plays a role in endosomal trafficking of the epidermal growth factor receptor (EGFR). In Homo sapiens (Human), this protein is Syntaxin-19 (STX19).